A 757-amino-acid chain; its full sequence is RNA-directed RNA polymerase catalytic subunit (757 aa).

Residues 52-82 are disordered; the sequence is KGKWTTNTETGAPQLNPIDGPLPEDNEPSGY. Residues 55-64 are compositionally biased toward polar residues; that stretch reads WTTNTETGAP. 2 consecutive short sequence motifs (nuclear localization signal) follow at residues 187–195 and 203–216; these read RKRRVRDNM and RTIG…NKKS. The promoter-binding site stretch occupies residues 249–256; it reads RGFVYFVE. In terms of domain architecture, RdRp catalytic spans 286–483; the sequence is VRKMMTNSQD…GINMSKKKSY (198 aa).

This sequence belongs to the influenza viruses polymerase PB1 family. In terms of assembly, influenza RNA polymerase is composed of three subunits: PB1, PB2 and PA. Interacts (via N-terminus) with PA (via C-terminus). Interacts (via C-terminus) with PB2 (via N-terminus); this interaction is essential for transcription initiation. Post-translationally, phosphorylated by host PRKCA.

Its subcellular location is the host nucleus. The protein localises to the host cytoplasm. The catalysed reaction is RNA(n) + a ribonucleoside 5'-triphosphate = RNA(n+1) + diphosphate. Its function is as follows. RNA-dependent RNA polymerase which is responsible for replication and transcription of virus RNA segments. The transcription of viral mRNAs occurs by a unique mechanism called cap-snatching. 5' methylated caps of cellular mRNAs are cleaved after 10-13 nucleotides by PA. In turn, these short capped RNAs are used as primers by PB1 for transcription of viral mRNAs. During virus replication, PB1 initiates RNA synthesis and copy vRNA into complementary RNA (cRNA) which in turn serves as a template for the production of more vRNAs. The polypeptide is RNA-directed RNA polymerase catalytic subunit (Aves (Cat)).